The chain runs to 208 residues: Small ribosomal subunit protein uS4 (208 aa).

In terms of domain architecture, S4 RNA-binding spans 98 to 160 (CRLDNVVYRM…AKKQSRIQLA (63 aa)).

This sequence belongs to the universal ribosomal protein uS4 family. In terms of assembly, part of the 30S ribosomal subunit. Contacts protein S5. The interaction surface between S4 and S5 is involved in control of translational fidelity.

Functionally, one of the primary rRNA binding proteins, it binds directly to 16S rRNA where it nucleates assembly of the body of the 30S subunit. With S5 and S12 plays an important role in translational accuracy. The sequence is that of Small ribosomal subunit protein uS4 from Vesicomyosocius okutanii subsp. Calyptogena okutanii (strain HA).